The following is a 1545-amino-acid chain: Pentafunctional AROM polypeptide (1545 aa).

Residues 1-383 (MSGLIEKVSI…YEPKASYVND (383 aa)) form a 3-dehydroquinate synthase region. Residues 44–46 (DSN), 82–85 (EANK), 113–115 (GGV), and aspartate 118 each bind NAD(+). Arginine 129 serves as a coordination point for 7-phospho-2-dehydro-3-deoxy-D-arabino-heptonate. An NAD(+)-binding site is contributed by 138–139 (TS). The 7-phospho-2-dehydro-3-deoxy-D-arabino-heptonate site is built by aspartate 145 and lysine 151. An NAD(+)-binding site is contributed by lysine 160. 7-phospho-2-dehydro-3-deoxy-D-arabino-heptonate is bound at residue asparagine 161. Residues 178–181 (FLET) and asparagine 189 each bind NAD(+). Glutamate 193 contributes to the Zn(2+) binding site. Residues 193–196 (EVVK) and lysine 249 each bind 7-phospho-2-dehydro-3-deoxy-D-arabino-heptonate. The active-site Proton acceptor; for 3-dehydroquinate synthase activity is the glutamate 259. 7-phospho-2-dehydro-3-deoxy-D-arabino-heptonate-binding positions include 263–267 (RNLLN) and histidine 270. Histidine 270 is a binding site for Zn(2+). Histidine 274 functions as the Proton acceptor; for 3-dehydroquinate synthase activity in the catalytic mechanism. Residues histidine 286 and lysine 355 each contribute to the 7-phospho-2-dehydro-3-deoxy-D-arabino-heptonate site. Zn(2+) is bound at residue histidine 286. The tract at residues 396–840 (VKDFNSAPST…WDILHTTFNV (445 aa)) is EPSP synthase. Cysteine 822 functions as the For EPSP synthase activity in the catalytic mechanism. The tract at residues 859 to 1049 (DKSIIVIGMR…IPNGRSAFVC (191 aa)) is shikimate kinase. ATP is bound at residue 866-873 (GMRAAGKS). Residues 1050–1261 (LTYEDLAPVS…AAPGQLTLKE (212 aa)) are 3-dehydroquinase. Histidine 1166 (proton acceptor; for 3-dehydroquinate dehydratase activity) is an active-site residue. Lysine 1195 (schiff-base intermediate with substrate; for 3-dehydroquinate dehydratase activity) is an active-site residue. The interval 1274–1545 (RKKFYIVGKP…GYQFSSHIDL (272 aa)) is shikimate dehydrogenase.

It in the N-terminal section; belongs to the sugar phosphate cyclases superfamily. Dehydroquinate synthase family. The protein in the 2nd section; belongs to the EPSP synthase family. In the 3rd section; belongs to the shikimate kinase family. This sequence in the 4th section; belongs to the type-I 3-dehydroquinase family. It in the C-terminal section; belongs to the shikimate dehydrogenase family. Homodimer. It depends on Zn(2+) as a cofactor.

Its subcellular location is the cytoplasm. It carries out the reaction 7-phospho-2-dehydro-3-deoxy-D-arabino-heptonate = 3-dehydroquinate + phosphate. It catalyses the reaction 3-dehydroquinate = 3-dehydroshikimate + H2O. The catalysed reaction is shikimate + NADP(+) = 3-dehydroshikimate + NADPH + H(+). The enzyme catalyses shikimate + ATP = 3-phosphoshikimate + ADP + H(+). It carries out the reaction 3-phosphoshikimate + phosphoenolpyruvate = 5-O-(1-carboxyvinyl)-3-phosphoshikimate + phosphate. Its pathway is metabolic intermediate biosynthesis; chorismate biosynthesis; chorismate from D-erythrose 4-phosphate and phosphoenolpyruvate: step 2/7. It functions in the pathway metabolic intermediate biosynthesis; chorismate biosynthesis; chorismate from D-erythrose 4-phosphate and phosphoenolpyruvate: step 3/7. It participates in metabolic intermediate biosynthesis; chorismate biosynthesis; chorismate from D-erythrose 4-phosphate and phosphoenolpyruvate: step 4/7. The protein operates within metabolic intermediate biosynthesis; chorismate biosynthesis; chorismate from D-erythrose 4-phosphate and phosphoenolpyruvate: step 5/7. Its pathway is metabolic intermediate biosynthesis; chorismate biosynthesis; chorismate from D-erythrose 4-phosphate and phosphoenolpyruvate: step 6/7. Its function is as follows. The AROM polypeptide catalyzes 5 consecutive enzymatic reactions in prechorismate polyaromatic amino acid biosynthesis. This Komagataella phaffii (strain GS115 / ATCC 20864) (Yeast) protein is Pentafunctional AROM polypeptide.